The following is a 274-amino-acid chain: uncharacterized protein (274 aa).

A C2 NT-type domain is found at 3–141; the sequence is IFIPKARRPT…TIRIGISLKQ (139 aa).

It to yeast YBL086c.

This is an uncharacterized protein from Schizosaccharomyces pombe (strain 972 / ATCC 24843) (Fission yeast).